The following is a 179-amino-acid chain: MSRIGKKILEIPAGVTITVAEDNTVTVKGPKGELTRTFNADMLIKIEENTLTVERPSEQKEHRALHGTTRALIGNMVEGVTEGFARGLELVGVGYRAQKQGDKLVLSVGYSHPVEMTPEAGLEVEVPAPTKIVIKGIDKQRVGEFAANIRAVRAPEPYKGKGIRYEGEVVRRKEGKTAK.

Belongs to the universal ribosomal protein uL6 family. In terms of assembly, part of the 50S ribosomal subunit.

Its function is as follows. This protein binds to the 23S rRNA, and is important in its secondary structure. It is located near the subunit interface in the base of the L7/L12 stalk, and near the tRNA binding site of the peptidyltransferase center. The chain is Large ribosomal subunit protein uL6 from Bacillus anthracis.